A 166-amino-acid chain; its full sequence is Cofilin-1 (166 aa).

Alanine 2 carries the post-translational modification N-acetylalanine. 2 positions are modified to phosphoserine: serine 3 and serine 8. Residues 4–153 (GVAVSDGVIK…KDRCTLAEKL (150 aa)) form the ADF-H domain. Position 13 is an N6-acetyllysine (lysine 13). Threonine 25 carries the phosphothreonine modification. Positions 30–34 (KKRKK) match the Nuclear localization signal motif. Serine 41 carries the phosphoserine modification. Tyrosine 68 is subject to Phosphotyrosine. Lysine 73 is subject to N6-acetyllysine. Lysine 132 participates in a covalent cross-link: Glycyl lysine isopeptide (Lys-Gly) (interchain with G-Cter in SUMO2). Tyrosine 140 carries the phosphotyrosine modification. The residue at position 144 (lysine 144) is an N6-acetyllysine. Serine 156 is modified (phosphoserine).

This sequence belongs to the actin-binding proteins ADF family. As to quaternary structure, can bind G- and F-actin in a 1:1 ratio of cofilin to actin. It is a major component of intranuclear and cytoplasmic actin rods. Interacts with the subcortical maternal complex (SCMC) via interaction with TLE6 and NLRP5. Interacts with C9orf72. Post-translationally, inactivated by phosphorylation on Ser-3. Phosphorylated on Ser-3 in resting cells. Dephosphorylated by PDXP/chronophin; this restores its activity in promoting actin filament depolymerization. The phosphorylation of Ser-24 may prevent recognition of the nuclear localization signal. Phosphorylated via a ARRB1-RAC1-LIMK1-PAK1 cascade upon active ligand stimulation of atypical chemokine receptor ACKR2.

It localises to the nucleus matrix. The protein resides in the cytoplasm. The protein localises to the cytoskeleton. It is found in the cell projection. Its subcellular location is the ruffle membrane. It localises to the lamellipodium membrane. The protein resides in the lamellipodium. The protein localises to the growth cone. It is found in the axon. Its function is as follows. Binds to F-actin and exhibits pH-sensitive F-actin depolymerizing activity. Important for normal progress through mitosis and normal cytokinesis. In conjunction with the subcortical maternal complex (SCMC), plays an essential role for zygotes to progress beyond the first embryonic cell divisions via regulation of actin dynamics. Required for the centralization of the mitotic spindle and symmetric division of zygotes. Plays a role in the regulation of cell morphology and cytoskeletal organization in epithelial cells. Required for the up-regulation of atypical chemokine receptor ACKR2 from endosomal compartment to cell membrane, increasing its efficiency in chemokine uptake and degradation. Required for neural tube morphogenesis and neural crest cell migration. This chain is Cofilin-1 (CFL1), found in Bos taurus (Bovine).